The sequence spans 727 residues: Pre-B-cell leukemia transcription factor-interacting protein 1 (727 aa).

Positions 1–10 (MASCPDSDNS) are enriched in polar residues. A disordered region spans residues 1–169 (MASCPDSDNS…GREPSSSQPV (169 aa)). Phosphoserine occurs at positions 131, 142, 143, and 144. Position 148 is a phosphothreonine (Thr148). Ser164 is subject to Phosphoserine. 2 coiled-coil regions span residues 270-350 (FLLD…RGVD) and 377-405 (DPSL…WQLL). Over residues 446 to 456 (QGINTGRSPND) the composition is skewed to polar residues. Disordered regions lie at residues 446–565 (QGIN…NSPD) and 694–727 (LKKR…YHQG). Over residues 473 to 563 (WGGKEKWRGG…QKHSWGKDNS (91 aa)) the composition is skewed to basic and acidic residues. The short motif at 486–506 (QKAEHWKPRKEESGQERQRSW) is the Nuclear localization signal element. Position 563 is a phosphoserine (Ser563). The Nuclear localization signal motif lies at 691–716 (DKALKKRSRKKEKHSWNPRVVGPREE). Residues 694–703 (LKKRSRKKEK) are compositionally biased toward basic residues.

As to quaternary structure, interacts with ESR1, PBX1, PBX2 and PBX3. Interacts with TEX11.

Its subcellular location is the cytoplasm. It localises to the cytoskeleton. The protein localises to the nucleus. Regulator of pre-B-cell leukemia transcription factors (BPXs) function. Inhibits the binding of PBX1-HOX complex to DNA and blocks the transcriptional activity of E2A-PBX1. Tethers estrogen receptor-alpha (ESR1) to microtubules and allows them to influence estrogen receptors-alpha signaling. The protein is Pre-B-cell leukemia transcription factor-interacting protein 1 (Pbxip1) of Mus musculus (Mouse).